The primary structure comprises 1694 residues: Immunoglobulin A1 protease autotransporter (1694 aa).

The first 25 residues, 1–25 (MLNKKFKLNFIALTVAYALTPYTEA), serve as a signal peptide directing secretion. The Peptidase S6 domain maps to 26–332 (ALVRDDVDYQ…NIYKPEFAKT (307 aa)). S288 is a catalytic residue. Residues 991 to 1403 (VEKRNQTVDT…GSDRSTVALR (413 aa)) form a disordered region. Residues 997 to 1021 (TVDTTNITTPNNIQADVPSVPSNNE) show a composition bias toward polar residues. Residues 1037–1047 (TPSETTETVAE) show a composition bias toward low complexity. A compositionally biased stretch (basic and acidic residues) spans 1049–1061 (SKQESKTVEKNEQ). The span at 1082-1095 (KANTQTNEVAQSGS) shows a compositional bias: polar residues. 2 stretches are compositionally biased toward basic and acidic residues: residues 1104 to 1124 (EIKE…KDEI) and 1142 to 1154 (APKE…KVEE). 2 stretches are compositionally biased toward polar residues: residues 1155–1178 (TQVQ…SPNS) and 1199–1210 (VSKNQTENTTDQ). Over residues 1211–1226 (PTEREKTAKVETEKTQ) the composition is skewed to basic and acidic residues. Polar residues-rich tracts occupy residues 1227–1247 (EPPQ…TVQP), 1255–1297 (NVPT…TAIT), and 1308–1336 (TETA…NSES). Residues 1352–1370 (ETSAEETTAASTDETTIAD) show a composition bias toward low complexity. The span at 1374–1384 (RSKPNRRSRRS) shows a compositional bias: basic residues. The 253-residue stretch at 1442–1694 (NNEGQYNVWV…TAELKLSFSF (253 aa)) folds into the Autotransporter domain.

It localises to the periplasm. The protein localises to the secreted. Its subcellular location is the cell surface. The protein resides in the cell outer membrane. It catalyses the reaction Cleavage of immunoglobulin A molecules at certain Pro-|-Xaa bonds in the hinge region. No small molecule substrates are known.. Functionally, virulence factor; cleaves host immunoglobulin A producing intact Fc and Fab fragments. This chain is Immunoglobulin A1 protease autotransporter (iga), found in Haemophilus influenzae (strain ATCC 51907 / DSM 11121 / KW20 / Rd).